Reading from the N-terminus, the 163-residue chain is Type VII secretion system protein EsaG (163 aa).

Interacts with EssD (via C-terminus). Interacts with EssE.

The protein resides in the cytoplasm. In terms of biological role, component of the type VII secretion system (Ess). Also acts as part of toxin-antitoxin system. Counteracts the toxic effect of EssD via direct interaction. This chain is Type VII secretion system protein EsaG, found in Staphylococcus aureus (strain NCTC 8325 / PS 47).